The chain runs to 211 residues: Small ribosomal subunit protein uS3 (211 aa).

A KH type-2 domain is found at 16 to 85 (IDEYFKTKLV…NPQIEVKQVE (70 aa)).

The protein belongs to the universal ribosomal protein uS3 family. Part of the 30S ribosomal subunit.

In terms of biological role, binds the lower part of the 30S subunit head. The sequence is that of Small ribosomal subunit protein uS3 from Methanococcus maripaludis (strain C5 / ATCC BAA-1333).